The sequence spans 255 residues: 3-hydroxyacyl-CoA dehydrogenase type-2 (255 aa).

6 residues coordinate NAD(+): Ser14, Leu16, Asp35, Asp58, Val59, and Cys85. Ser149 lines the substrate pocket. Residues Tyr162, Lys166, Phe195, and Thr197 each coordinate NAD(+). Catalysis depends on Tyr162, which acts as the Proton acceptor.

This sequence belongs to the short-chain dehydrogenases/reductases (SDR) family. In terms of assembly, component of mitochondrial ribonuclease P, a complex composed of rswl/MRPP1, scu/MRPP2 and mldr/MRPP3. Found in many tissues including CNS, imaginal disks and salivary glands. Highest expression in both embryonic gonadal primordia and mature ovaries and testes.

It localises to the mitochondrion. The enzyme catalyses a (3S)-3-hydroxyacyl-CoA + NAD(+) = a 3-oxoacyl-CoA + NADH + H(+). It carries out the reaction (3S)-3-hydroxybutanoyl-CoA + NAD(+) = acetoacetyl-CoA + NADH + H(+). The catalysed reaction is testosterone + NAD(+) = androst-4-ene-3,17-dione + NADH + H(+). It catalyses the reaction 5alpha-androstane-3alpha,17beta-diol + NAD(+) = 17beta-hydroxy-5alpha-androstan-3-one + NADH + H(+). The enzyme catalyses 17beta-estradiol + NAD(+) = estrone + NADH + H(+). It carries out the reaction ursodeoxycholate + NAD(+) = 7-oxolithocholate + NADH + H(+). The catalysed reaction is 3beta,7beta-dihydroxy-5beta-cholan-24-oate + NAD(+) = 3beta-hydroxy-7-oxo-5beta-cholan-24-oate + NADH + H(+). It catalyses the reaction 11-dehydrocorticosterone + NAD(+) = pregn-4-ene-3,11,20,21-tetraone + NADH + H(+). The enzyme catalyses cortisone + NAD(+) = 17alpha-hydroxypregn-4-en-3,11,20-trione-21-al + NADH + H(+). It carries out the reaction cortisol + NAD(+) = 11beta,17alpha-dihydroxypregn-4-ene-3,20,21-trione + NADH + H(+). The catalysed reaction is 5alpha-pregnan-20beta-ol-3-one + NAD(+) = 5alpha-pregnane-3,20-dione + NADH + H(+). It catalyses the reaction 17beta-hydroxy-5alpha-androstan-3-one + NAD(+) = 5alpha-androstan-3,17-dione + NADH + H(+). Functionally, mitochondrial dehydrogenase involved in pathways of fatty acid, and steroid metabolism. Versatile enzyme presenting two types of activity; L-3-hydroxyacyl-CoA dehydrogenase ((3S)-3-hydroxyacyl-CoA dehydrogenase) activity and hydroxysteroid dehydrogenase (HSD) activity with a wide substrate spectrum. As a (3S)-3-hydroxyacyl-CoA dehydrogenase, it functions in the third step of the fatty acid beta-oxidation pathway, a major metabolic process in which fatty acids are oxidized to provide a significant source of energy, while also generating acyl-CoA metabolites used by many metabolic routes. As a HSD, it functions in the degradation pathways of glucocorticoids and sex steroids and epimerization of bile acids; catalyzes the beta-oxidation at position 17 of androgens and estrogens, has 3-alpha-hydroxysteroid dehydrogenase activity with androsterone, and carries out oxidative conversions of 7-beta-hydroxylated bile acids like ursodeoxycholate or isoursodeoxycholate (also known as 3-beta,7-beta-dihydroxy-5-beta-cholan-24-oate or 7-beta-hydroxyisolithocholate, respectively). Also exhibits 20-beta-OH and 21-OH dehydrogenase activities with C21 steroids. Essential for structural and functional integrity of mitochondria. Required for cell survival during embryonic development. May play a role in germline formation. In terms of biological role, in addition to mitochondrial dehydrogenase activity, moonlights as a component of mitochondrial ribonuclease P, a complex that cleaves tRNA molecules in their 5'-ends. Essential for the structural and functional integrity of mitochondria. Function is essential for pupal development. The sequence is that of 3-hydroxyacyl-CoA dehydrogenase type-2 from Drosophila melanogaster (Fruit fly).